A 752-amino-acid chain; its full sequence is Translation initiation factor IF-2 (752 aa).

The segment at 26–167 (RQGMGVKSHM…QPTQRKDKPL (142 aa)) is disordered. A compositionally biased stretch (polar residues) spans 34–47 (HMSSVTPDQAQQLR). Low complexity predominate over residues 72 to 81 (KQNNHQAQNH). Over residues 83-96 (QHHDHDKTQNERPQ) the composition is skewed to basic and acidic residues. Residues 101–129 (SRSNNGTKDNNQHQNNGGRFGGSLNNDQG) show a composition bias toward polar residues. A compositionally biased stretch (basic residues) spans 131-150 (NGKRFNKKNKKNKKHNKNKR). Positions 151–167 (LREVAHKQPTQRKDKPL) are enriched in basic and acidic residues. Residues 253–422 (TRPAVVTVMG…LLQAEMLELK (170 aa)) enclose the tr-type G domain. The interval 262-269 (GHVDHGKT) is G1. A GTP-binding site is contributed by 262 to 269 (GHVDHGKT). The tract at residues 287-291 (GITQE) is G2. The segment at 308 to 311 (DTPG) is G3. GTP is bound by residues 308-312 (DTPGH) and 362-365 (NKID). The tract at residues 362–365 (NKID) is G4. Residues 398–400 (SAK) are G5.

The protein belongs to the TRAFAC class translation factor GTPase superfamily. Classic translation factor GTPase family. IF-2 subfamily.

The protein resides in the cytoplasm. One of the essential components for the initiation of protein synthesis. Protects formylmethionyl-tRNA from spontaneous hydrolysis and promotes its binding to the 30S ribosomal subunits. Also involved in the hydrolysis of GTP during the formation of the 70S ribosomal complex. In Limosilactobacillus reuteri (strain DSM 20016) (Lactobacillus reuteri), this protein is Translation initiation factor IF-2.